Consider the following 87-residue polypeptide: Putative regulatory protein BCQ_3657 (87 aa).

It belongs to the RemA family.

This Bacillus cereus (strain Q1) protein is Putative regulatory protein BCQ_3657.